The sequence spans 149 residues: MAAPVDPREVQSLQTYLNQYTQQAEVYSRQLGMMEEGIREANASIETLKALAEAGEAPVFMPIGGGLNIRATIIQPDEVFVSIGSDIIVQKTNEGAISYLQDRIKEMEATAKNLTEVLQKIDAQVKDIQKRLEQLYRQAQAEQQGAGSL.

This sequence belongs to the prefoldin subunit alpha family. Heterohexamer of two alpha and four beta subunits.

Its subcellular location is the cytoplasm. In terms of biological role, molecular chaperone capable of stabilizing a range of proteins. Seems to fulfill an ATP-independent, HSP70-like function in archaeal de novo protein folding. The chain is Prefoldin subunit alpha from Methanospirillum hungatei JF-1 (strain ATCC 27890 / DSM 864 / NBRC 100397 / JF-1).